A 36-amino-acid chain; its full sequence is Neuropeptide F (36 aa).

Residue F36 is modified to Phenylalanine amide.

It belongs to the NPY family. As to expression, central and peripheral nervous system, and muscular pharynx.

The protein resides in the secreted. May perform an important neurotransmitter function and may regulate muscular activity. This Arthurdendyus triangulatus (New Zealand flatworm) protein is Neuropeptide F.